A 60-amino-acid chain; its full sequence is Short neurotoxin 1 (60 aa).

4 cysteine pairs are disulfide-bonded: cysteine 3/cysteine 22, cysteine 17/cysteine 39, cysteine 41/cysteine 52, and cysteine 53/cysteine 58.

The protein belongs to the three-finger toxin family. Short-chain subfamily. Type I alpha-neurotoxin sub-subfamily. In terms of tissue distribution, expressed by the venom gland.

The protein resides in the secreted. Binds to muscle nicotinic acetylcholine receptor (nAChR) and inhibit acetylcholine from binding to the receptor, thereby impairing neuromuscular transmission. The recombinant protein also barely blocks voltage-gated potassium channel Kv1.3/KCNA3 (2.71% inhibition at 60 nM of toxin). This Hydrophis lapemoides (Persian gulf sea snake) protein is Short neurotoxin 1.